The chain runs to 404 residues: MSPSDVPINWKRNLTVTWLGCFLTGAAFSLVMPFLPLYVEQLGVTGHSALNMWSGLVFSITFLFSAIASPFWGGLADRKGRKIMLLRSALGMAIVMLLMGMAQNIWQFLILRALLGLLGGFIPNANALIATQVPRHKSGWALGTLSTGGVSGALLGPLAGGLLADHYGLRPVFFITASVLFICFLLTFFFIRENFLPVSKKEMLHVREVVASLKNPRLVLSLFVTTLIIQVATGSIAPILTLYVRELAGNVSNIAFISGMIASVPGVAALLSAPRLGKLGDRIGPEKILIVALIISVLLLIPMSFVQTPWQLALLRFLLGAADGALLPAVQTLLVYNSTNQIAGRIFSYNQSFRDIGNVTGPLMGAAISASYDFRAVFCVTAGVVLFNAIYSWNSLRRRRLAIE.

The next 11 helical transmembrane spans lie at 19-39, 56-76, 90-110, 113-133, 144-164, 171-191, 222-242, 254-274, 288-308, 317-337, and 376-396; these read LGCF…PLYV, LVFS…GGLA, LGMA…QFLI, ALLG…ATQV, TLST…GLLA, PVFF…FFFI, LFVT…ILTL, IAFI…LSAP, ILIV…FVQT, FLLG…LVYN, and AVFC…WNSL.

Belongs to the major facilitator superfamily. DHA1 family. MdtG (TC 2.A.1.2.20) subfamily.

The protein resides in the cell inner membrane. This is Multidrug resistance protein MdtG from Salmonella heidelberg (strain SL476).